The following is a 277-amino-acid chain: 5'-nucleotidase SurE (277 aa).

Positions 14, 15, 46, and 104 each coordinate a divalent metal cation.

Belongs to the SurE nucleotidase family. It depends on a divalent metal cation as a cofactor.

Its subcellular location is the cytoplasm. The catalysed reaction is a ribonucleoside 5'-phosphate + H2O = a ribonucleoside + phosphate. In terms of biological role, nucleotidase that shows phosphatase activity on nucleoside 5'-monophosphates. The protein is 5'-nucleotidase SurE of Picosynechococcus sp. (strain ATCC 27264 / PCC 7002 / PR-6) (Agmenellum quadruplicatum).